The chain runs to 146 residues: Leptin (146 aa).

Cys-96 and Cys-146 are joined by a disulfide.

It belongs to the leptin family.

The protein localises to the secreted. In terms of biological role, key player in the regulation of energy balance and body weight control. Once released into the circulation, has central and peripheral effects by binding LEPR, found in many tissues, which results in the activation of several major signaling pathways. In the hypothalamus, acts as an appetite-regulating factor that induces a decrease in food intake and an increase in energy consumption by inducing anorexinogenic factors and suppressing orexigenic neuropeptides, also regulates bone mass and secretion of hypothalamo-pituitary-adrenal hormones. In the periphery, increases basal metabolism, influences reproductive function, regulates pancreatic beta-cell function and insulin secretion, is pro-angiogenic for endothelial cell and affects innate and adaptive immunity. In the arcuate nucleus of the hypothalamus, activates by depolarization POMC neurons inducing FOS and SOCS3 expression to release anorexigenic peptides and inhibits by hyperpolarization NPY neurons inducing SOCS3 with a consequent reduction on release of orexigenic peptides. In addition to its known satiety inducing effect, has a modulatory role in nutrient absorption. In the intestine, reduces glucose absorption by enterocytes by activating PKC and leading to a sequential activation of p38, PI3K and ERK signaling pathways which exerts an inhibitory effect on glucose absorption. Acts as a growth factor on certain tissues, through the activation of different signaling pathways increases expression of genes involved in cell cycle regulation such as CCND1, via JAK2-STAT3 pathway, or VEGFA, via MAPK1/3 and PI3K-AKT1 pathways. May also play an apoptotic role via JAK2-STAT3 pathway and up-regulation of BIRC5 expression. Pro-angiogenic, has mitogenic activity on vascular endothelial cells and plays a role in matrix remodeling by regulating the expression of matrix metalloproteinases (MMPs) and tissue inhibitors of metalloproteinases (TIMPs). In innate immunity, modulates the activity and function of neutrophils by increasing chemotaxis and the secretion of oxygen radicals. Increases phagocytosis by macrophages and enhances secretion of pro-inflammatory mediators. Increases cytotoxic ability of NK cells. Plays a pro-inflammatory role, in synergy with IL1B, by inducing NOS2 which promotes the production of IL6, IL8 and Prostaglandin E2, through a signaling pathway that involves JAK2, PI3K, MAP2K1/MEK1 and MAPK14/p38. In adaptive immunity, promotes the switch of memory T-cells towards T helper-1 cell immune responses. Increases CD4(+)CD25(-) T-cell proliferation and reduces autophagy during TCR (T-cell receptor) stimulation, through MTOR signaling pathway activation and BCL2 up-regulation. This Gorilla gorilla gorilla (Western lowland gorilla) protein is Leptin (LEP).